The sequence spans 180 residues: Ribulose bisphosphate carboxylase small subunit, chloroplastic 3 (180 aa).

The N-terminal 56 residues, 1 to 56 (MASSLMSNAITAVVGASGAQANMVAPFNGLKSIASFPVTRKSNDITSIASNGGRVQ), are a transit peptide targeting the chloroplast.

The protein belongs to the RuBisCO small chain family. Heterohexadecamer of 8 large and 8 small subunits.

It localises to the plastid. The protein localises to the chloroplast. In terms of biological role, ruBisCO catalyzes two reactions: the carboxylation of D-ribulose 1,5-bisphosphate, the primary event in carbon dioxide fixation, as well as the oxidative fragmentation of the pentose substrate. Both reactions occur simultaneously and in competition at the same active site. Although the small subunit is not catalytic it is essential for maximal activity. This is Ribulose bisphosphate carboxylase small subunit, chloroplastic 3 from Amaranthus hypochondriacus (Prince-of-Wales feather).